The sequence spans 430 residues: Histidinol dehydrogenase (430 aa).

Substrate contacts are provided by serine 237, glutamine 259, and histidine 262. 2 residues coordinate Zn(2+): glutamine 259 and histidine 262. Residues glutamate 327 and histidine 328 each act as proton acceptor in the active site. The substrate site is built by histidine 328, aspartate 361, glutamate 415, and histidine 420. Aspartate 361 is a binding site for Zn(2+). Histidine 420 is a Zn(2+) binding site.

It belongs to the histidinol dehydrogenase family. Requires Zn(2+) as cofactor.

The catalysed reaction is L-histidinol + 2 NAD(+) + H2O = L-histidine + 2 NADH + 3 H(+). The protein operates within amino-acid biosynthesis; L-histidine biosynthesis; L-histidine from 5-phospho-alpha-D-ribose 1-diphosphate: step 9/9. In terms of biological role, catalyzes the sequential NAD-dependent oxidations of L-histidinol to L-histidinaldehyde and then to L-histidine. The protein is Histidinol dehydrogenase of Mesorhizobium japonicum (strain LMG 29417 / CECT 9101 / MAFF 303099) (Mesorhizobium loti (strain MAFF 303099)).